Here is an 84-residue protein sequence, read N- to C-terminus: uncharacterized protein (84 aa).

A helical transmembrane segment spans residues 13–35; that stretch reads TTLVLTIISTTTTTLFAIIQLYL. Positions 41–84 form a coiled coil; the sequence is LKDAVKEIVNSELSNLKTEIEELKIKQDELSRQVEEIKRKLDQK.

The protein localises to the host membrane. This is an uncharacterized protein from Sulfolobus islandicus rod-shaped virus 1 (SIRV-1).